The primary structure comprises 401 residues: Type 3 secretion system translocon protein SctE (401 aa).

Residues 129-160 (IQRLHEQNMKKIEENQEKIKETEENAKQVKKS) adopt a coiled-coil conformation. A run of 2 helical transmembrane segments spans residues 166-186 (IFGW…VASG) and 225-245 (LGPI…VMTF). Positions 345–379 (LALNKADMAALQSIIDRLKEELSHLSESHRQVMEL) form a coiled coil.

The protein belongs to the SctE/SipB/YopB family. In terms of assembly, the core secretion machinery of the T3SS is composed of approximately 20 different proteins, including cytoplasmic components, a base, an export apparatus and a needle. This subunit is involved in the formation of a pore, called the translocon, in host membrane. Interacts with YopD/SctB. Together with YopD/SctB, forms a multimeric integral membrane complex with a mass of between 500 and 700 kDa.

Its subcellular location is the secreted. The protein resides in the host membrane. Functionally, component of the type III secretion system (T3SS), also called injectisome, which is used to inject bacterial effector proteins into eukaryotic host cells. YopB/SctE and YopD/SctB are inserted into the host membrane where they form a pore and allow the translocation of effector proteins into the cytosol of target cells. Is an essential virulence determinant. Required for YopE translocation. Essential for the establishment of Yersinia infections in a mouse model system, but not for the targeting of effector Yops. May modulate the host's immune response at a distance from the site of infection. This Yersinia enterocolitica protein is Type 3 secretion system translocon protein SctE.